We begin with the raw amino-acid sequence, 583 residues long: Zinc finger protein 277 (583 aa).

2 consecutive C2H2-type zinc fingers follow at residues 351 to 375 and 482 to 508; these read LQCL…KKQH and HQCK…DTKH.

It belongs to the ZNF277 family. Interacts (via zinc-finger domains) with RPS2/40S ribosomal protein S2, perhaps as nascent RPS2 is synthesized during translation; the interaction is direct; the interaction is extra-ribosomal. Interaction with RPS2 competes with the binding of RPS2 to protein arginine methyltransferase PRMT3. Interacts with Polycomb group (PcG) complex protein BMI1. May be part of a complex including at least ZNF277, BMI1 and RNF2/RING2.

Its subcellular location is the nucleus. The protein localises to the cytoplasm. It localises to the nucleolus. It is found in the chromosome. Functionally, probable transcription factor. Involved in modulation of cellular senescence; represses transcription of the tumor suppressor gene INK4A/ARF, perhaps acting via the Polycomb group (PcG) complex PRC1. In Mus musculus (Mouse), this protein is Zinc finger protein 277.